A 138-amino-acid polypeptide reads, in one-letter code: Acidic phospholipase A2 ammodytin I1 (138 aa).

Residues 1–16 (MRILWIVAVCLIGAEG) form the signal peptide. Intrachain disulfides connect cysteine 42-cysteine 131, cysteine 44-cysteine 60, cysteine 59-cysteine 111, cysteine 65-cysteine 138, cysteine 66-cysteine 104, cysteine 73-cysteine 97, and cysteine 91-cysteine 102. Ca(2+)-binding residues include tyrosine 43, glycine 45, and glycine 47. The active site involves histidine 63. Aspartate 64 serves as a coordination point for Ca(2+). Aspartate 105 is an active-site residue.

It belongs to the phospholipase A2 family. Group II subfamily. D49 sub-subfamily. Requires Ca(2+) as cofactor. In terms of tissue distribution, expressed by the venom gland.

The protein resides in the secreted. It carries out the reaction a 1,2-diacyl-sn-glycero-3-phosphocholine + H2O = a 1-acyl-sn-glycero-3-phosphocholine + a fatty acid + H(+). Its function is as follows. Snake venom phospholipase A2 (PLA2) that has enzymatic activity but is non-toxic. PLA2 catalyzes the calcium-dependent hydrolysis of the 2-acyl groups in 3-sn-phosphoglycerides. This chain is Acidic phospholipase A2 ammodytin I1, found in Vipera ammodytes ammodytes (Western sand viper).